The primary structure comprises 440 residues: Alpha-methylserine aldolase (440 aa).

Lys-255 is modified (N6-(pyridoxal phosphate)lysine).

It belongs to the SHMT family. Alpha-methylserine aldolase subfamily. Homodimer. The cofactor is pyridoxal 5'-phosphate.

The enzyme catalyses 2-methyl-L-serine = formaldehyde + L-alanine. Functionally, catalyzes the reversible interconversion of alpha-methyl-L-serine to L-alanine and formaldehyde. The sequence is that of Alpha-methylserine aldolase from Variovorax paradoxus.